The following is a 440-amino-acid chain: Sorting nexin-31 (440 aa).

The PX domain occupies Met-1–Thr-109.

The protein belongs to the sorting nexin family. In terms of assembly, interacts with CCDC22, CCDC93, VPS26C and VPS35L, associates with the retriever and CCC complexes.

Functionally, may be involved in protein trafficking. In Homo sapiens (Human), this protein is Sorting nexin-31 (SNX31).